We begin with the raw amino-acid sequence, 358 residues long: Peptide chain release factor 1 (358 aa).

Q233 bears the N5-methylglutamine mark.

The protein belongs to the prokaryotic/mitochondrial release factor family. In terms of processing, methylated by PrmC. Methylation increases the termination efficiency of RF1.

It is found in the cytoplasm. Peptide chain release factor 1 directs the termination of translation in response to the peptide chain termination codons UAG and UAA. The sequence is that of Peptide chain release factor 1 from Geobacillus sp. (strain WCH70).